The following is a 493-amino-acid chain: MTRDVVRKARLSGERTEDIESLLSSMEADRNIASSDVLVDMAHLVMLTRQQIVHEDHAKTLMKELLCMYESGVPAEAFDPSYEDIHAGIETILTRKTGGDVGGRLHIGRSRNDEVATCLRIRTRDIILDQLEALTRLRSVLLSVAADHITTVMPGFTHLQHAQPVTLAHHLLAYEQMFSRDFDRLFDALRRVNCSPLGSAALASTGYPLDRPFTADLLGFDRILVNSMDAVASRDFAEETLACDTMLLTNISRFCEELIIWSSAFVQFVNLDDRYCSTSSIMPQKKNPDVAEILRSRTGTILGSFVSAITIVKGLPMAYNRDLQDLNPHLWRGITGVRRDIDLLAGMVESATFNRERMAEEAGRGGTTTTELADTLVREFNIPFRTAHHIVGKAVKDGSLDLVTLDRGAEEFYGKTLSSLGVTQKNIDSALSVSTSLSVRKLPGGPAPDAVLDALAERRKELEKDIELICDKKTQISASLHELLTQARRIAQL.

This sequence belongs to the lyase 1 family. Argininosuccinate lyase subfamily.

It is found in the cytoplasm. It carries out the reaction 2-(N(omega)-L-arginino)succinate = fumarate + L-arginine. It participates in amino-acid biosynthesis; L-arginine biosynthesis; L-arginine from L-ornithine and carbamoyl phosphate: step 3/3. This is Argininosuccinate lyase from Methanospirillum hungatei JF-1 (strain ATCC 27890 / DSM 864 / NBRC 100397 / JF-1).